Reading from the N-terminus, the 564-residue chain is Type 2 DNA topoisomerase 6 subunit B (564 aa).

ATP is bound by residues N46, D78, 99–100, 109–116, and K471; these read TK and GQQGIGIS.

Belongs to the TOP6B family. In terms of assembly, homodimer. Heterotetramer of two Top6A and two Top6B chains.

The catalysed reaction is ATP-dependent breakage, passage and rejoining of double-stranded DNA.. Functionally, relaxes both positive and negative superturns and exhibits a strong decatenase activity. This Pyrococcus horikoshii (strain ATCC 700860 / DSM 12428 / JCM 9974 / NBRC 100139 / OT-3) protein is Type 2 DNA topoisomerase 6 subunit B.